Reading from the N-terminus, the 572-residue chain is MARILITSAIPYINGIKHLGNLVGSQLPADLYARYMRGRGHEVMFICATDEHGTPAELAAAKAGKPVEVYCAEMHEIQKEIAAGFRLSFDHFGRSSSARNHRLTQHFAGQLAENGFIEEVSERQVFSVADNRFLPDRYIEGTCPNCGYDKARGDQCENCTKQLDPTDLINPRSAISGSTDLEVRETKHLYLRQRALKDEIEAWIDSKTDWPVLTTSIAKKWLHDGEGLQDRGITRDLHWGVPVKKGDQPWPGMEGKVFYVWFDAPIEYIAGTAEWADANGKTEADWERWWRTDKGAGDVRYVQFMGKDNVPFHTLSFPATIMGSREPWKLVDYIKSFNYLNYDGGQFSTSQGRGVFMDQALSILPADYWRWWLLSHAPENSDSEFTWENFQASVNKDLADVLGNLVSRVTKFCRSKFGETVPAGGAFGEREHQLIAELQERLAAYESCMEAMEIRKAATELRALWVAGNEYLQSAAPWTVVKTDPERAQAMIRLSLNLIRLYAVISRPFIPDAAASTMASLGCDDWSWPTDVAAALERLPAGHAFTTPDVLFRKITDEERAEWQTRFAGVRT.

The 'HIGH' region signature appears at 11–21 (PYINGIKHLGN). Zn(2+) is bound by residues Cys-143, Cys-146, Cys-156, and Cys-159. A 'KMSKS' region motif is present at residues 346–350 (QFSTS). Thr-349 contributes to the ATP binding site.

It belongs to the class-I aminoacyl-tRNA synthetase family. MetG type 1 subfamily. As to quaternary structure, monomer. The cofactor is Zn(2+).

It localises to the cytoplasm. The enzyme catalyses tRNA(Met) + L-methionine + ATP = L-methionyl-tRNA(Met) + AMP + diphosphate. Functionally, is required not only for elongation of protein synthesis but also for the initiation of all mRNA translation through initiator tRNA(fMet) aminoacylation. The polypeptide is Methionine--tRNA ligase (Cereibacter sphaeroides (strain ATCC 17025 / ATH 2.4.3) (Rhodobacter sphaeroides)).